We begin with the raw amino-acid sequence, 367 residues long: MTIINRKTAPALLALALFGGAAQAALVPPQGYYEGIEKLKSSDGDFRCEAAPRPYTGSLRFRSKYEGSDKARATLNVASEKAFRASTKDITTLEKGVSKMVGQYMRDGRPAQLDCALTWLGTWARADALMSSDYNHTGKSMRKWALGSMSGSWLRLKFSNSQPLAAHQAEAEQIEKWFARLAQQTVRDWSGLPLEKINNHSYWAAWSVMATAVATDRRDLFDWAVKEYKVGANQVDEQGFLPNELKRRQRALAYHNYALPPLAMIASFAQANGVDLRKENNFALQRLGEGVLAGARDPSQFTAHAGVKQDLHDLKIDSKYAWLEPWCALYHCVGDTLERKHDMQPFDSFRLGGDVTRVYDPGAESKK.

An N-terminal signal peptide occupies residues 1–24; that stretch reads MTIINRKTAPALLALALFGGAAQA. Substrate is bound by residues 63–64, 136–137, and Y254; these read SK and HT.

It belongs to the polysaccharide lyase 5 family.

Its subcellular location is the periplasm. The catalysed reaction is Eliminative cleavage of alginate to give oligosaccharides with 4-deoxy-alpha-L-erythro-hex-4-enuronosyl groups at their non-reducing ends and beta-D-mannuronate at their reducing end.. Functionally, catalyzes the depolymerization of alginate by cleaving the beta-1,4 glycosidic bond between two adjacent sugar residues via a beta-elimination mechanism. May serve to degrade mislocalized alginate that is trapped in the periplasmic space. This chain is Alginate lyase, found in Pseudomonas entomophila (strain L48).